The sequence spans 215 residues: Adenylate kinase (215 aa).

Position 10 to 15 (10 to 15 (GAGKGT)) interacts with ATP. Positions 30-58 (STGDMLREAKRSGTLEKRYLDIMDSGGLL) are NMP. AMP-binding positions include Thr-31, Arg-36, 56–58 (GLL), 84–87 (GFPR), and Gln-91. Residues 128–158 (HRRTDKRSGQIYHLVYNPPPPGAELEHRADD) form an LID region. ATP contacts are provided by residues Arg-129 and 138-139 (IY). Residues Arg-155 and Arg-166 each coordinate AMP. Gly-194 contributes to the ATP binding site.

This sequence belongs to the adenylate kinase family. In terms of assembly, monomer.

It localises to the cytoplasm. It carries out the reaction AMP + ATP = 2 ADP. Its pathway is purine metabolism; AMP biosynthesis via salvage pathway; AMP from ADP: step 1/1. Functionally, catalyzes the reversible transfer of the terminal phosphate group between ATP and AMP. Plays an important role in cellular energy homeostasis and in adenine nucleotide metabolism. In Sorangium cellulosum (strain So ce56) (Polyangium cellulosum (strain So ce56)), this protein is Adenylate kinase.